A 325-amino-acid chain; its full sequence is Protein TMED8 (325 aa).

The disordered stretch occupies residues 1–78 (MSDLQAAEGP…MVSPVSKDAT (78 aa)). In terms of domain architecture, GOLD spans 159-323 (PPCIWTFAKV…NKTLYFHIYY (165 aa)). N6-acetyllysine is present on Lys-169. The interval 232 to 267 (TVQVSDSSDDEDEEEEEEEEIEEPVPAGDVERGSRS) is disordered. The span at 238 to 254 (SSDDEDEEEEEEEEIEE) shows a compositional bias: acidic residues.

The sequence is that of Protein TMED8 (TMED8) from Homo sapiens (Human).